The chain runs to 699 residues: Protein Scribble homolog let-413 (699 aa).

LRR repeat units follow at residues 37 to 59 (KLED…FSLR), 60 to 81 (HLRI…IGNL), 83 to 104 (QLIE…MQNC), 106 to 127 (LLTT…ICEC), 129 to 150 (SITI…IGSL), 152 to 174 (NLRV…VELR), 175 to 196 (KLEE…IGKL), 198 to 219 (SLRE…ISGC), 221 to 242 (MLDQ…LGRM), 244 to 265 (NLTD…FGEL), 267 to 288 (RLQM…IGKC), 290 to 311 (SLTE…IGDL), 313 to 334 (QLTT…IGNC), 336 to 357 (SLTV…IGKC), 359 to 380 (NLTV…VKVL), and 382 to 403 (KLQA…SETR). In terms of domain architecture, PDZ spans 584–665 (AGGTSNDPAP…RSPSPVSRTS (82 aa)). A disordered region spans residues 656-699 (RSPSPVSRTSEPSLNGSSHQLNHFDAGSPDSTMFVTSSTPVYAS). Composition is skewed to polar residues over residues 659–676 (SPVS…SHQL) and 684–699 (PDST…VYAS).

The protein belongs to the LAP (LRR and PDZ) protein family. In terms of tissue distribution, expressed in the terminal web of the intestine. Expressed in seam cells. Expressed in the basolateral surfaces of epithelia and the nervous system. Expressed in the intestine, epidermis, excretory canal, reproductive system including vulva, uterus and spermatheca, in both larval and adult stage animals.

The protein resides in the basolateral cell membrane. Critical role in assembling adherens junctions; adapter protein involved in polarizing protein trafficking in epithelial cells. Necessary to maintain, not establish, the entire terminal web (organelle-depleted, intermediate filament-rich layer of cytoplasm that underlies the apical microvilli of polarized epithelial cells) or brush border assembly at the apical surface gut cells. Required for correct localization of ifb-2 intermediate filaments in the terminal web. Required for dlg-1 and hmr-1 lateral localization. Maintains cell polarity by correctly positioning adherens junction protein components including ajm-1 and hmp-1 at discrete subapical positions. Plays a role in the correct localization of the dlg-1-ajm-1 complex, polarity protein par-3, and actin microfilament to the apical junction of spermatheca cells, and is required for ovulation. Regulates the establishment of newly-formed epithelia in conjunction with dlg-1. Required in the epidermis during larval development. Plays a role in cellular junction integrity and in the directed outgrowth of seam cells, towards neighboring seam cells, during larval development; probably acts by promoting the assembly and stability of dlg-1 at apical junctions. In Caenorhabditis elegans, this protein is Protein Scribble homolog let-413.